A 269-amino-acid chain; its full sequence is MSSFQQENQLNANNNNNNVMNEYISYSVPLSPVTTNENPQDYWMNGLIANSVPISQTTSNSDINYSQPPNPINFNSIFEGVNIFSNDDFTSSSNDISLANSPETNATSDSIAQNLDEVKVKLENHNQARLDALEFAFETKSILKEQPKIKQEPGTKAATKPKRRAPRKKLTESQKKAHNKIEKRYRININAKIAGIQKIIPWVAFEKTAFETGEENETEAEAKNNTRLNKSMILEKATEYILHLQKKEEEYMAENQKLREQVIKLGGEI.

The disordered stretch occupies residues 146–178 (QPKIKQEPGTKAATKPKRRAPRKKLTESQKKAH). Over residues 159 to 168 (TKPKRRAPRK) the composition is skewed to basic residues. Residues 169–178 (KLTESQKKAH) show a composition bias toward basic and acidic residues. Residues 173-244 (SQKKAHNKIE…EKATEYILHL (72 aa)) form the bHLH domain.

As to quaternary structure, efficient DNA binding requires dimerization with another bHLH protein.

The protein resides in the nucleus. Key transcriptional regulator of carbohydrate metabolism. Binds the promoter sequences of the glycolytic genes at the CANNTG motif and activates their expression during growth on either fermentable or non-fermentable carbon sources as well as under hypoxic growth conditions. Complete glycolytic activation by GAL4 and TYE7 is required for full virulence. Involved in biofilm formation and negatively regulates hyphal formation under hypoxia. Also controls the expression of the copper transport protein CTR1. The chain is Carbohydrate metabolism regulator TYE7 (TYE7) from Candida albicans (strain SC5314 / ATCC MYA-2876) (Yeast).